The chain runs to 772 residues: Semaphorin-3A (772 aa).

The N-terminal stretch at 1-20 (MGWFTGIACLFWGVLLTARA) is a signal peptide. Residues 31–514 (RLKLSYKEML…STAGVAQLPL (484 aa)) enclose the Sema domain. A glycan (N-linked (GlcNAc...) asparagine) is linked at N53. Residues C103 and C114 are joined by a disulfide bond. Residue N125 is glycosylated (N-linked (GlcNAc...) asparagine). 4 cysteine pairs are disulfide-bonded: C132–C141, C269–C381, C293–C341, and C517–C535. The Ig-like C2-type domain occupies 579–665 (PSLEERIIYG…GFMQTLLKVT (87 aa)). N591 is a glycosylation site (N-linked (GlcNAc...) asparagine). The cysteines at positions 650 and 723 are disulfide-linked. Positions 729 to 738 (RDRKQRRQRP) are enriched in basic residues. The segment at 729-772 (RDRKQRRQRPGHSQGSSNKWKHMQESKKGRNRRTHEFERAPRSV) is disordered. The segment covering 750–772 (HMQESKKGRNRRTHEFERAPRSV) has biased composition (basic and acidic residues).

The protein belongs to the semaphorin family. As to quaternary structure, interacts with PXND1.

The protein resides in the secreted. Functionally, plays a role in growth cones guidance. May function to pattern sensory projections by selectively repelling axons that normally terminate dorsally. Involved in the development of the olfactory system and in neuronal control of puberty. The chain is Semaphorin-3A (Sema3a) from Mus musculus (Mouse).